Reading from the N-terminus, the 302-residue chain is Large ribosomal subunit protein uL18 (302 aa).

Belongs to the universal ribosomal protein uL18 family. As to quaternary structure, component of the large ribosomal subunit (LSU).

It localises to the cytoplasm. The protein localises to the nucleus. Functionally, component of the ribosome, a large ribonucleoprotein complex responsible for the synthesis of proteins in the cell. The small ribosomal subunit (SSU) binds messenger RNAs (mRNAs) and translates the encoded message by selecting cognate aminoacyl-transfer RNA (tRNA) molecules. The large subunit (LSU) contains the ribosomal catalytic site termed the peptidyl transferase center (PTC), which catalyzes the formation of peptide bonds, thereby polymerizing the amino acids delivered by tRNAs into a polypeptide chain. The nascent polypeptides leave the ribosome through a tunnel in the LSU and interact with protein factors that function in enzymatic processing, targeting, and the membrane insertion of nascent chains at the exit of the ribosomal tunnel. In Cucumis sativus (Cucumber), this protein is Large ribosomal subunit protein uL18 (RPL5).